Here is a 206-residue protein sequence, read N- to C-terminus: Tetrathionate response regulatory protein TtrR (206 aa).

In terms of domain architecture, Response regulatory spans 3–117 (TIHLLDDDTA…PLQAALERAL (115 aa)). Aspartate 52 is modified (4-aspartylphosphate). One can recognise an HTH luxR-type domain in the interval 134–194 (QQLTPKEREL…ELIRRFEKMA (61 aa)). Positions 153 to 172 (NREIAEAMNIAVRTVEVHRA) form a DNA-binding region, H-T-H motif.

In terms of processing, phosphorylated by TtrS.

It is found in the cytoplasm. Its function is as follows. Member of the two-component regulatory system TtrR/TtrS, which is required for synthesis of tetrathionate reductase. Positively regulates transcription of the ttrBCA operon. During mice infection, the ability to use tetrathionate as an electron acceptor is a growth advantage for S.typhimurium over the competing microbiota in the lumen of the inflamed gut. This is Tetrathionate response regulatory protein TtrR (ttrR) from Salmonella typhimurium (strain LT2 / SGSC1412 / ATCC 700720).